The following is a 660-amino-acid chain: Cysteine-rich receptor-like protein kinase 22 (660 aa).

The first 24 residues, 1–24 (MKQRSFLSILCFILLAFGVASVSA), serve as a signal peptide directing secretion. Gnk2-homologous domains follow at residues 25-128 (QTCI…NISF) and 137-250 (IEPQ…LFTF). At 25 to 294 (QTCIENRKYF…DSRGVSAGIV (270 aa)) the chain is on the extracellular side. N-linked (GlcNAc...) asparagine glycosylation is found at N37, N53, N105, N125, N191, N230, and N256. Residues 264–273 (KPPMNVPRPP) show a composition bias toward pro residues. Residues 264 to 283 (KPPMNVPRPPSVGHGANTTD) are disordered. N280 and N284 each carry an N-linked (GlcNAc...) asparagine glycan. Residues 295-315 (VVITVPAVVIVLILVVLGFFI) form a helical membrane-spanning segment. The Cytoplasmic portion of the chain corresponds to 316–660 (CWRRKSLQRT…DPLSEGLESG (345 aa)). The Protein kinase domain maps to 353 to 632 (FSKSNKLGEG…IVSMLTSNTI (280 aa)). ATP is bound by residues 359–367 (LGEGRFGEV) and K381. Position 426 is a phosphotyrosine (Y426). D478 serves as the catalytic Proton acceptor. S482 is modified (phosphoserine). A Phosphothreonine modification is found at T518. Y526 is subject to Phosphotyrosine.

This sequence belongs to the protein kinase superfamily. Ser/Thr protein kinase family. CRK subfamily.

The protein resides in the membrane. It carries out the reaction L-seryl-[protein] + ATP = O-phospho-L-seryl-[protein] + ADP + H(+). The enzyme catalyses L-threonyl-[protein] + ATP = O-phospho-L-threonyl-[protein] + ADP + H(+). The protein is Cysteine-rich receptor-like protein kinase 22 (CRK22) of Arabidopsis thaliana (Mouse-ear cress).